A 551-amino-acid chain; its full sequence is L-lactate permease (551 aa).

12 helical membrane passes run Asn-13–Ile-33, Leu-37–Phe-57, Val-69–Phe-89, Gly-131–Phe-151, Leu-159–Val-179, Met-194–Met-214, Phe-244–Leu-264, Phe-306–Ala-326, Phe-366–Trp-386, Leu-405–Ser-425, Thr-438–Gly-458, and Ile-530–Ile-550.

This sequence belongs to the lactate permease family.

It localises to the cell inner membrane. It catalyses the reaction (S)-lactate(in) + H(+)(in) = (S)-lactate(out) + H(+)(out). The catalysed reaction is (R)-lactate(in) + H(+)(in) = (R)-lactate(out) + H(+)(out). It carries out the reaction glycolate(in) + H(+)(in) = glycolate(out) + H(+)(out). In terms of biological role, uptake of L-lactate across the membrane. Can also transport D-lactate and glycolate. Seems to be driven by a proton motive force. In Salmonella typhimurium (strain LT2 / SGSC1412 / ATCC 700720), this protein is L-lactate permease (lldP).